We begin with the raw amino-acid sequence, 355 residues long: Guanine nucleotide-binding protein G(i) subunit alpha-2 (355 aa).

G2 carries the N-myristoyl glycine lipid modification. C3 carries the S-palmitoyl cysteine lipid modification. A G-alpha domain is found at R32–F355. A G1 motif region spans residues K35–T48. GTP-binding positions include G40–S47, L176–T182, D201–Q205, N270–D273, and A327. Mg(2+) is bound by residues S47 and T182. The segment at D174–T182 is G2 motif. Positions F197–R206 are G3 motif. Residues I266 to D273 are G4 motif. The segment at T325–T330 is G5 motif.

It belongs to the G-alpha family. G(i/o/t/z) subfamily. As to quaternary structure, g proteins are composed of 3 units; alpha, beta and gamma. The alpha chain contains the guanine nucleotide binding site. In this context, interacts with GNB2. Interacts with UNC5B. Interacts with GPSM1. Interacts with RGS12 and RGS14. Interacts (inactive GDP-bound form) with NUCB1 (via GBA motif); the interaction leads to activation of GNAI3. Interacts (inactive GDP-bound form) with CCDC88C/DAPLE (via GBA motif). Interacts (inactive GDP-bound form) with CCDC8A/GIV (via GBA motif).

Its subcellular location is the cytoplasm. The protein resides in the cell membrane. It is found in the cytoskeleton. The protein localises to the microtubule organizing center. It localises to the centrosome. Its subcellular location is the membrane. Its function is as follows. Guanine nucleotide-binding proteins (G proteins) are involved as modulators or transducers in various transmembrane signaling systems. The G(i) proteins are involved in hormonal regulation of adenylate cyclase: they inhibit the cyclase in response to beta-adrenergic stimuli. May play a role in cell division. In Rattus norvegicus (Rat), this protein is Guanine nucleotide-binding protein G(i) subunit alpha-2 (Gnai2).